Reading from the N-terminus, the 380-residue chain is Ceramide synthase 2 (380 aa).

At 1 to 40 the chain is on the lumenal side; the sequence is MLQTLYDYFWWERLWLPVNLTWADLEDKDGRVYAKASDLY. An N-linked (GlcNAc...) asparagine glycan is attached at Asn19. Residues 41-61 form a helical membrane-spanning segment; it reads ITLPLALLFLVIRYFFELYVA. The interval 67–128 is homeobox-like; it reads LLNVKEKTRL…RRRRNQDRPS (62 aa). In terms of domain architecture, TLC spans 131 to 332; the sequence is KKFREASWRF…ILRMAHKFIT (202 aa). 4 helical membrane-spanning segments follow: residues 140-160, 175-195, 209-229, and 264-284; these read FTYY…KPWF, IIPS…SLLF, QIIH…ANYV, and LFIV…PFWI. The Last loop motif motif lies at 291–300; sequence YPLELYPAFF. A helical transmembrane segment spans residues 304–324; it reads FFNFMMAVLQMLHIFWAYFIL. The Cytoplasmic segment spans residues 325–380; the sequence is RMAHKFITGKLIEDERSDREETESSEGEETAAGAGAKSRLLANGHPILNNNHPKND. The segment at 340-380 is disordered; the sequence is RSDREETESSEGEETAAGAGAKSRLLANGHPILNNNHPKND. Ser341 carries the post-translational modification Phosphoserine. The segment covering 344-353 has biased composition (acidic residues); the sequence is EETESSEGEE. A Phosphothreonine modification is found at Thr346. Ser348 and Ser349 each carry phosphoserine.

In terms of assembly, interacts with ATP6V0C, ASGR1, ASGR2 and SLC22A1/OCT1. Interacts with ELOV1, HSD17B12 and TECR. Interacts with NDUFS2. Interacts with PAQR4; the interaction regulates the stability and activity of CERS2 and is inhibited in presence of ceramides. In terms of processing, acetylated. Deacetylation by SIRT3 increases enzyme activity and promotes mitochondrial ceramide accumulation. Phosphorylated at the C-terminus by CK2, leading to increase the ceramide synthase activity. In terms of tissue distribution, broadly expressed, with highest levels in liver and kidney. In brain is detected in neurons, oligodentrocytes, ependymal cells and epithelial cells of the choroid plexus. In kidney is detected in collecting ducts and to a lesser degree in proximal tubules.

It localises to the endoplasmic reticulum membrane. The catalysed reaction is a very long-chain fatty acyl-CoA + a sphingoid base = an N-(very-long-chain fatty acyl)-sphingoid base + CoA + H(+). It catalyses the reaction docosanoyl-CoA + sphinganine = N-docosanoylsphinganine + CoA + H(+). The enzyme catalyses tetracosanoyl-CoA + sphinganine = N-tetracosanoylsphinganine + CoA + H(+). It carries out the reaction hexacosanoyl-CoA + sphinganine = N-hexacosanoylsphinganine + CoA + H(+). The catalysed reaction is (15Z)-tetracosenoyl-CoA + sphinganine = N-(15Z-tetracosenoyl)-sphinganine + CoA + H(+). It catalyses the reaction 2-hydroxytetracosanoyl-CoA + sphinganine = N-(2-hydroxytetracosanoyl)-sphinganine + CoA + H(+). The enzyme catalyses 2-hydroxydocosanoyl-CoA + sphinganine = N-(2-hydroxydocosanoyl)-sphinganine + CoA + H(+). It carries out the reaction 2-hydroxytetracosenoyl-CoA + sphinganine = N-(2-hydroxytetracosenoyl)-sphinganine + CoA + H(+). The catalysed reaction is tetracosenoyl-CoA + sphinganine = an N-tetracosenoylsphinganine + CoA + H(+). It catalyses the reaction hexacosenoyl-CoA + sphinganine = N-hexacosenoylsphinganine + CoA + H(+). The enzyme catalyses tetracosanoyl-CoA + sphing-4-enine = N-tetracosanoyl-sphing-4-enine + CoA + H(+). It carries out the reaction tetracosenoyl-CoA + sphing-4-enine = N-(tetracosenoyl)-sphing-4-enine + CoA + H(+). The catalysed reaction is heptadecasphing-4-enine + tetracosanoyl-CoA = N-tetracosanoyl-heptadecasphing-4-enine + CoA + H(+). It catalyses the reaction a fatty acyl-CoA + sphing-4-enine = an N-acylsphing-4-enine + CoA + H(+). The enzyme catalyses sphing-4-enine + hexadecanoyl-CoA = N-hexadecanoylsphing-4-enine + CoA + H(+). It carries out the reaction sphing-4-enine + octadecanoyl-CoA = N-octadecanoylsphing-4-enine + CoA + H(+). The catalysed reaction is eicosanoyl-CoA + sphing-4-enine = N-eicosanoyl-sphing-4-enine + CoA + H(+). It catalyses the reaction sphinganine + hexadecanoyl-CoA = N-hexadecanoylsphinganine + CoA + H(+). The enzyme catalyses sphinganine + octadecanoyl-CoA = N-(octadecanoyl)-sphinganine + CoA + H(+). It carries out the reaction sphinganine + (9Z)-octadecenoyl-CoA = N-(9Z-octadecenoyl)-sphinganine + CoA + H(+). The catalysed reaction is eicosanoyl-CoA + sphinganine = N-eicosanoylsphinganine + CoA + H(+). Its pathway is lipid metabolism; sphingolipid metabolism. With respect to regulation, ceramide synthase activity is inhibited by sphingosine-1-phosphate. Functionally, ceramide synthase that catalyzes the transfer of the acyl chain from acyl-CoA to a sphingoid base, with high selectivity toward very-long-chain fatty acyl-CoA (chain length C22-C27). N-acylates sphinganine and sphingosine bases to form dihydroceramides and ceramides in de novo synthesis and salvage pathways, respectively. Plays a non-redundant role in the synthesis of ceramides with very-long-chain fatty acids in kidney, liver and brain. Regulates the abundance of myelin-specific sphingolipids galactosylceramide and sulfatide that affects myelin sheath architecture and motor neuron functions. In Mus musculus (Mouse), this protein is Ceramide synthase 2.